The chain runs to 129 residues: Replication initiation control protein YabA (129 aa).

Zn(2+) contacts are provided by H103, C105, C119, and C122.

It belongs to the YabA family. As to quaternary structure, homotetramer. Interacts with both DnaA and DnaN, acting as a bridge between these two proteins. It depends on Zn(2+) as a cofactor.

The protein localises to the cytoplasm. The protein resides in the nucleoid. Functionally, involved in control of chromosome replication initiation. Inhibits the cooperative binding of DnaA to the oriC region, thus negatively regulating initiation of chromosome replication. Inhibits the ability of DnaA-ATP to form a helix on DNA; does not disassemble preformed DnaA-DNA helices. Decreases the residence time of DnaA on the chromosome at its binding sites (oriC, replication forks and promoter-binding sites). Tethers DnaA to the replication machinery via the DNA polymerase beta sliding clamp subunit (dnaN). Associates with oriC and other DnaA targets on the chromosome in a DnaA-dependent manner. This is Replication initiation control protein YabA from Listeria innocua serovar 6a (strain ATCC BAA-680 / CLIP 11262).